The sequence spans 275 residues: 2,3,4,5-tetrahydropyridine-2,6-dicarboxylate N-succinyltransferase (275 aa).

Positions 106 and 143 each coordinate substrate.

It belongs to the transferase hexapeptide repeat family. Homotrimer.

It is found in the cytoplasm. It catalyses the reaction (S)-2,3,4,5-tetrahydrodipicolinate + succinyl-CoA + H2O = (S)-2-succinylamino-6-oxoheptanedioate + CoA. Its pathway is amino-acid biosynthesis; L-lysine biosynthesis via DAP pathway; LL-2,6-diaminopimelate from (S)-tetrahydrodipicolinate (succinylase route): step 1/3. The chain is 2,3,4,5-tetrahydropyridine-2,6-dicarboxylate N-succinyltransferase from Burkholderia ambifaria (strain ATCC BAA-244 / DSM 16087 / CCUG 44356 / LMG 19182 / AMMD) (Burkholderia cepacia (strain AMMD)).